A 1748-amino-acid chain; its full sequence is MAFQLALDALSSTTHRDSISAPLLDSSVSQLQSSLELFPYTVPKELVPQLNRMGIQVSGLTSTPHPHAAHKTLELNLLFNHWAKSCNVDSAVVFMKPSKFFKLQEKNSHFKSLHNYRLHPHDSNRYPHPSTSLPTEKRFYIHDSLMYFTPHQISGLFESCPNLLSLYASLVVPPESSMTDLSLNPDLYRYSIHKSTLHYTPEGHSAGSYNQPVNALDWLKISAIQTPSLSLSVSVLESWGPLHSLLIERSSQTQNPDSQKIKDLISFQTPQALILPNPDSLAVPLRHRLVPQKTYDALFTYTRATRTLRTSDPAGFVRTQSNKPEFNWVTSQAWDNLQTYALLTASYRPPVSYTLHRSPLTKLKELLTRNALKLAAMASPALTLAIFTTMTALNTNSSKALSFSALKIHLLNPLTGPELLHFQTSVLQQKNSAPLSQAEAKQELDKSAVPAPSEHDSSASQSTSLSLSASSQLLSTEKHPGSELSSKAIPVSTSCPSASKQLAPPLTAESHSSVNALLRKFLGPNSPQSNLDNYNLHLHPESFTLGWKRRPLLLDSHSSFLPSSCLQPPASPSIAAAPHPLPPAQKPPRPPTTVPTPKPLASPSQTQAAQPATQSPPSIPQTAPVTSLLPAPLETDDSCAGPISTFQDLFPASYYPHTANFPCRSKIPGYLEAPYPPLDCMLVALSAQMPQSPQELWSALNTLMPLSALTSPSLRVLGLGTEELTALSYYYHFQAEIHSDNEIYRFGIQTASTKLCLIRDSGPPAHFTAPDPLRAGSPPSRSQTNENSLRRSLLGFRLNGNLLPIDQVHSFTSEPSRAKNLASNMKNGFDGILTTLAALSSLSSGPSPRDRIFTLDGICDFALPKTVDLIHLSGFAGCGKTHPIQQLLKTPHFHNFRVVTPTTNLRSEWKSDMALPAHHNWRFSTWESALLKHAEILVIDEIYKLPRGYLDLSLIADPTVKLVILLGDPLQGEYHSTSAHSSNLRLSSEIPRLLPFIDYYCYWSYRVPKCVAKLFSLPCFNPSEGFIKTTLDFFPSANNLVNSHSVVHISEACGWNAVTISSSQGCTFSDPAFIHLDRNTALLSPSNCLVALTRSRSGVYFKGDFTFLSSLSGSSRMFSLAYSGQPIHLPDFFPEIVFQLNMITAPLTKRSSSFRSGFQPNISSAPKIPAPPNLPCPPHIPTNYSKDVIVNNQALYGESLERRLSVLHLPPTRMTLHSDINITAPSSSSFQPSDEPVPSDHTAVYPGFDFFTLAAHFLPAHDPEVKEIELKDQTSQQFPWLNLDFHISCQTSSLISARHQPGSDSTLLPASLHKRLRFRPTAAPYQITPSDSFLGNCLYRSWCQVYRRDPNVRLPFNEALFLECIAVNDYAQLSSKTQATIVANASRSDPDWRHTFVKIFAKSQHKVNDGSIFGPWKACQTLALMHDYVILTLGPVKKYQRLFDQLERPSHIYYHAGNTPHDLRRWCSKHLETSHCTTNDYTAFDQSQHGEAVVFEVLKMRRLSIPENLISLHVHLKTNVETQFGPLTCMRLTGEPGTYDDNTDYNLAVLNLQYDLRKTPTLVSGDDSYLSGTLSPRSNWPFVKELLHLRLKPSSLIDGLFCGYYLGPQGCIRNPLALFAKLMIAEDDGSAFDKLPSYLTEFSIGHGLGDSLWQLLPSDLVLYQSACFDYFCRKATRSQKILLQPGLVDQETLDKIALSAKFISRPFYSMLSSHARSLISTKFKLDSSLTTLQDPMVEFELLPFSNVQ.

Residues 58–219 (SGLTSTPHPH…NQPVNALDWL (162 aa)) form the Alphavirus-like MT domain. Disordered regions lie at residues 433 to 507 (APLS…PPLT) and 569 to 633 (PASP…PAPL). Positions 458–475 (SASQSTSLSLSASSQLLS) are enriched in low complexity. Residues 491-500 (VSTSCPSASK) show a composition bias toward polar residues. Over residues 579–600 (HPLPPAQKPPRPPTTVPTPKPL) the composition is skewed to pro residues. Over residues 601–616 (ASPSQTQAAQPATQSP) the composition is skewed to low complexity. The Peptidase C21 domain occupies 627-781 (SLLPAPLETD…PLRAGSPPSR (155 aa)). Residues C680 and H766 each act as for protease activity in the active site. A disordered region spans residues 767–786 (FTAPDPLRAGSPPSRSQTNE). The 158-residue stretch at 844–1001 (SGPSPRDRIF…RLLPFIDYYC (158 aa)) folds into the (+)RNA virus helicase ATP-binding domain. 874-881 (GFAGCGKT) provides a ligand contact to ATP. Residues 1002–1138 (YWSYRVPKCV…LPDFFPEIVF (137 aa)) form the (+)RNA virus helicase C-terminal domain. Residues 1474-1580 (SHCTTNDYTA…SGTLSPRSNW (107 aa)) form the RdRp catalytic domain.

This sequence belongs to the Tymoviridae non-structural replication polyprotein family. In terms of processing, specific enzymatic cleavages by the host yield mature proteins.

It carries out the reaction RNA(n) + a ribonucleoside 5'-triphosphate = RNA(n+1) + diphosphate. Acts as a cysteine protease, methyltransferase and deubiquitinase. The cysteine protease activity cleaves the polyprotein giving rise to mature proteins. The methyltransferase domain is probably involved in viral RNA capping. Its function is as follows. RNA-directed RNA polymerase is responsible for the replication and transcription of the genome. In Erysimum latent virus (ELV), this protein is Non-structural replication polyprotein.